Here is a 96-residue protein sequence, read N- to C-terminus: Muconolactone Delta-isomerase 1 (96 aa).

Belongs to the muconolactone Delta-isomerase family. In terms of assembly, homodecamer.

It carries out the reaction (S)-muconolactone = (4,5-dihydro-5-oxofuran-2-yl)-acetate. It participates in aromatic compound metabolism; beta-ketoadipate pathway; 5-oxo-4,5-dihydro-2-furylacetate from catechol: step 3/3. The protein is Muconolactone Delta-isomerase 1 (catC1) of Acinetobacter lwoffii.